Consider the following 216-residue polypeptide: Ras-related protein Rab-11A (216 aa).

Residue glycine 2 is modified to N-acetylglycine. Positions 20, 21, 22, 23, 24, 25, 26, 37, 38, 40, 42, and 43 each coordinate GTP. Serine 25 is a binding site for Mg(2+). A Switch 1 motif is present at residues phenylalanine 36 to glutamate 47. Residues threonine 43 and aspartate 66 each contribute to the Mg(2+) site. The Switch 2 signature appears at threonine 67–glycine 86. Residues glycine 69, asparagine 124, lysine 125, aspartate 127, alanine 155, and leucine 156 each contribute to the GTP site. Residues aspartate 183–glutamine 211 are disordered. Residues cysteine 212 and cysteine 213 are each lipidated (S-geranylgeranyl cysteine). Residue cysteine 213 is modified to Cysteine methyl ester. A propeptide spans glutamine 214 to isoleucine 216 (removed in mature form).

This sequence belongs to the small GTPase superfamily. Rab family. As to quaternary structure, interacts (GTP-bound form) with RAB11FIPs (via their C-termini) including RAB11FIP1, RAB11FIP2, RAB11FIP3, RAB11FIP4 and RAB11FIP5 effectors. Forms a complex with RAB11FIP3 and dynein intermediate chain DYNC1LI1; the interaction between RAB11A1 and RAB11FIP3 is direct; the complex regulates endocytic trafficking. Interacts with EVI5; EVI5 and RAB11FIP3 may be mutually exclusive and compete for binding RAB11A. Interacts with SGSM1, SGSM2, SGSM3 and VIPAS39. Interacts with EXOC6 in a GTP-dependent manner. Interacts with RAB11FIP5. Interacts with STXBP6. Interacts (GDP-bound form) with ZFYVE27. Interacts with BIRC6/bruce. May interact with TBC1D14. Interacts with UNC119; in a cell cycle-dependent manner. GDP-bound and nucleotide-free forms interact with SH3BP5. Interacts (GDP-bound form) with KIF5A in a ZFYVE27-dependent manner. Interacts (GDP-bound form) with RELCH. Found in a complex composed of RELCH, OSBP1 and RAB11A. Interacts with TBC1D12. Interacts with DEF6. Interacts with ATP9A. Forms a heterotetramer with RAB11FIP3; the GTP-bound form is preferred for binding. Forms a complex with Rabin8/RAB3IP and RAB11FIP3, probably a heterohexamer with two of each protein subunit, where Rabin8/RAB3IP and RAB11FIP3 simultaneously bind to RAB11A; the complex promotes preciliary trafficking and cilia growth. Forms a complex containing RAB11A, ASAP1, Rabin8/RAB3IP, RAP11FIP3 and ARF4; the complex promotes preciliary trafficking; the complex binds to RHO in photoreceptor cells and promotes RHO ciliary transport. Interacts (GTP-bound form) with WDR44; the interaction prevents RAB11A-RAB3IP-RAB11FIP3 complex formation. Mg(2+) is required as a cofactor. In terms of tissue distribution, detected in various tissues, such as brain, testis, spleen, and heart.

Its subcellular location is the cell membrane. The protein localises to the endosome membrane. It is found in the recycling endosome membrane. It localises to the cleavage furrow. The protein resides in the cytoplasmic vesicle. Its subcellular location is the phagosome. The protein localises to the cytoplasmic vesicle membrane. It is found in the golgi apparatus. It localises to the trans-Golgi network. The enzyme catalyses GTP + H2O = GDP + phosphate + H(+). With respect to regulation, regulated by guanine nucleotide exchange factors (GEFs) which promote the exchange of bound GDP for free GTP. Regulated by GTPase activating proteins (GAPs) which increase the GTP hydrolysis activity. Inhibited by GDP dissociation inhibitors (GDIs) which prevent Rab-GDP dissociation. Functionally, the small GTPases Rab are key regulators of intracellular membrane trafficking, from the formation of transport vesicles to their fusion with membranes. Rabs cycle between an inactive GDP-bound form and an active GTP-bound form that is able to recruit to membranes different set of downstream effectors directly responsible for vesicle formation, movement, tethering and fusion. The small Rab GTPase RAB11A regulates endocytic recycling. Forms a functional Rab11/RAB11FIP3/dynein complex that regulates the movement of peripheral sorting endosomes (SE) along microtubule tracks toward the microtubule organizing center/centrosome, generating the endosomal recycling compartment (ERC). Acts as a major regulator of membrane delivery during cytokinesis. Together with MYO5B and RAB8A participates in epithelial cell polarization. Together with Rabin8/RAB3IP, RAB8A, the exocyst complex, PARD3, PRKCI, ANXA2, CDC42 and DNMBP promotes transcytosis of PODXL to the apical membrane initiation sites (AMIS), apical surface formation and lumenogenesis. Together with MYO5B participates in CFTR trafficking to the plasma membrane and TF (Transferrin) recycling in nonpolarized cells. Required in a complex with MYO5B and RAB11FIP2 for the transport of NPC1L1 to the plasma membrane. Participates in the sorting and basolateral transport of CDH1 from the Golgi apparatus to the plasma membrane. Regulates the recycling of FCGRT (receptor of Fc region of monomeric IgG) to basolateral membranes. May also play a role in melanosome transport and release from melanocytes. Promotes Rabin8/RAB3IP preciliary vesicular trafficking to mother centriole by forming a ciliary targeting complex containing Rab11, ASAP1, Rabin8/RAB3IP, RAB11FIP3 and ARF4, thereby regulating ciliogenesis initiation. On the contrary, upon LPAR1 receptor signaling pathway activation, interaction with phosphorylated WDR44 prevents Rab11-RAB3IP-RAB11FIP3 complex formation and cilia growth. Participates in the export of a subset of neosynthesized proteins through a Rab8-Rab10-Rab11-endososomal dependent export route via interaction with WDR44. This Rattus norvegicus (Rat) protein is Ras-related protein Rab-11A.